Reading from the N-terminus, the 128-residue chain is MDNKKKEENPSKSDTSISLPPSSTGEALQNYTESEWNASDDPYSAELLNVKKKPNRVNVFSATEKNMETIIVTEESPPQTPLPLKPVVEHHNLARLIQKSCQLLLDKTTPDGTEVQIKLEFPDWRDTA.

The span at 1-11 (MDNKKKEENPS) shows a compositional bias: basic and acidic residues. The disordered stretch occupies residues 1-40 (MDNKKKEENPSKSDTSISLPPSSTGEALQNYTESEWNASD). Residues 12–37 (KSDTSISLPPSSTGEALQNYTESEWN) are compositionally biased toward polar residues.

This is an uncharacterized protein from Caenorhabditis elegans.